The sequence spans 225 residues: Deoxyribose-phosphate aldolase (225 aa).

D94 (proton donor/acceptor) is an active-site residue. Residue K158 is the Schiff-base intermediate with acetaldehyde of the active site. The active-site Proton donor/acceptor is K187.

This sequence belongs to the DeoC/FbaB aldolase family. DeoC type 1 subfamily.

It localises to the cytoplasm. It carries out the reaction 2-deoxy-D-ribose 5-phosphate = D-glyceraldehyde 3-phosphate + acetaldehyde. Its pathway is carbohydrate degradation; 2-deoxy-D-ribose 1-phosphate degradation; D-glyceraldehyde 3-phosphate and acetaldehyde from 2-deoxy-alpha-D-ribose 1-phosphate: step 2/2. Functionally, catalyzes a reversible aldol reaction between acetaldehyde and D-glyceraldehyde 3-phosphate to generate 2-deoxy-D-ribose 5-phosphate. In Thermococcus gammatolerans (strain DSM 15229 / JCM 11827 / EJ3), this protein is Deoxyribose-phosphate aldolase.